The primary structure comprises 246 residues: 23S rRNA (guanosine-2'-O-)-methyltransferase RlmB (246 aa).

S-adenosyl-L-methionine is bound by residues G196, I216, and L225.

This sequence belongs to the class IV-like SAM-binding methyltransferase superfamily. RNA methyltransferase TrmH family. RlmB subfamily. Homodimer.

Its subcellular location is the cytoplasm. It catalyses the reaction guanosine(2251) in 23S rRNA + S-adenosyl-L-methionine = 2'-O-methylguanosine(2251) in 23S rRNA + S-adenosyl-L-homocysteine + H(+). In terms of biological role, specifically methylates the ribose of guanosine 2251 in 23S rRNA. The chain is 23S rRNA (guanosine-2'-O-)-methyltransferase RlmB from Yersinia pestis.